Consider the following 119-residue polypeptide: Small ribosomal subunit protein bS6 (119 aa).

The protein belongs to the bacterial ribosomal protein bS6 family.

Functionally, binds together with bS18 to 16S ribosomal RNA. This is Small ribosomal subunit protein bS6 from Buchnera aphidicola subsp. Baizongia pistaciae (strain Bp).